Consider the following 204-residue polypeptide: Holliday junction branch migration complex subunit RuvA (204 aa).

A domain I region spans residues 1–64 (MIGRLQGILL…EDAHLLFGFA (64 aa)). A domain II region spans residues 65 to 143 (QKTDRTLFRE…GVKQSDFFVE (79 aa)). Residues 144–155 (STHIPLSPSIES) are flexible linker. The domain III stretch occupies residues 156–204 (HSESSSDEAISALIALGYKPVEAEKMVKRVAKPELTSEQVIREALKAAL).

This sequence belongs to the RuvA family. In terms of assembly, homotetramer. Forms an RuvA(8)-RuvB(12)-Holliday junction (HJ) complex. HJ DNA is sandwiched between 2 RuvA tetramers; dsDNA enters through RuvA and exits via RuvB. An RuvB hexamer assembles on each DNA strand where it exits the tetramer. Each RuvB hexamer is contacted by two RuvA subunits (via domain III) on 2 adjacent RuvB subunits; this complex drives branch migration. In the full resolvosome a probable DNA-RuvA(4)-RuvB(12)-RuvC(2) complex forms which resolves the HJ.

It is found in the cytoplasm. Its function is as follows. The RuvA-RuvB-RuvC complex processes Holliday junction (HJ) DNA during genetic recombination and DNA repair, while the RuvA-RuvB complex plays an important role in the rescue of blocked DNA replication forks via replication fork reversal (RFR). RuvA specifically binds to HJ cruciform DNA, conferring on it an open structure. The RuvB hexamer acts as an ATP-dependent pump, pulling dsDNA into and through the RuvAB complex. HJ branch migration allows RuvC to scan DNA until it finds its consensus sequence, where it cleaves and resolves the cruciform DNA. This is Holliday junction branch migration complex subunit RuvA from Haemophilus influenzae (strain PittEE).